The following is a 207-amino-acid chain: Putative threonylcarbamoyl-AMP synthase (207 aa).

In terms of domain architecture, YrdC-like spans 15–199 (EEERKKVLEF…KIISIREGVI (185 aa)).

Belongs to the SUA5 family.

It localises to the cytoplasm. It carries out the reaction L-threonine + hydrogencarbonate + ATP = L-threonylcarbamoyladenylate + diphosphate + H2O. Required for the formation of a threonylcarbamoyl group on adenosine at position 37 (t(6)A37) in tRNAs that read codons beginning with adenine. Catalyzes the conversion of L-threonine, HCO(3)(-)/CO(2) and ATP to give threonylcarbamoyl-AMP (TC-AMP) as the acyladenylate intermediate, with the release of diphosphate. This chain is Putative threonylcarbamoyl-AMP synthase, found in Methanocaldococcus jannaschii (strain ATCC 43067 / DSM 2661 / JAL-1 / JCM 10045 / NBRC 100440) (Methanococcus jannaschii).